A 290-amino-acid polypeptide reads, in one-letter code: L-proline cis-3-hydroxylase 2 (290 aa).

Fe cation contacts are provided by His-107, Asp-109, and His-158. Residue Arg-168 participates in 2-oxoglutarate binding.

It belongs to the L-proline cis-4-/cis-3-hydroxylase family. In terms of assembly, homodimer. Requires Fe(2+) as cofactor.

The catalysed reaction is L-proline + 2-oxoglutarate + O2 = cis-3-hydroxy-L-proline + succinate + CO2. Inhibited by metal ions such as Co(2+), Zn(2+), Ni(2+) or Cu(2+). Is also inhibited by EDTA in vitro. In terms of biological role, dioxygenase that catalyzes the 2-oxoglutarate-dependent selective hydroxylation of free L-proline to cis-3-hydroxy-L-proline (cis-3-Hyp). The protein is L-proline cis-3-hydroxylase 2 of Streptomyces sp.